The primary structure comprises 239 residues: MGRMLTIRVFKYDPQSAVSKPHFQEYKIEEAPSMTIFIVLNMIRETYDPDLNFDFVCRAGICGSCGMMINGRPSLACRTLTKDFEDGVITLLPLPAFKLIKDLSVDTGNWFNGMSQRVESWIHAQKEHDISKLEERIEPEVAQEVFELDRCIECGCCIAACGTKIMREDFVGAAGLNRVVRFMIDPHDERTDEDYYELIGDDDGVFGCMTLLACHDVCPKNLPLQSKIAYLRRKMVSVN.

Positions 5-95 constitute a 2Fe-2S ferredoxin-type domain; sequence LTIRVFKYDP…DGVITLLPLP (91 aa). 4 residues coordinate [2Fe-2S] cluster: Cys-57, Cys-62, Cys-65, and Cys-77. The 30-residue stretch at 142-171 folds into the 4Fe-4S ferredoxin-type domain; that stretch reads AQEVFELDRCIECGCCIAACGTKIMREDFV. Positions 151, 154, and 157 each coordinate [4Fe-4S] cluster. [3Fe-4S] cluster is bound by residues Cys-161, Cys-208, and Cys-214. Cys-218 is a [4Fe-4S] cluster binding site.

This sequence belongs to the succinate dehydrogenase/fumarate reductase iron-sulfur protein family. Part of an enzyme complex containing three subunits: a flavoprotein (frdA), an iron-sulfur protein (frdB), and diheme cytochrome b (frdC). The cofactor is [2Fe-2S] cluster. It depends on [3Fe-4S] cluster as a cofactor. Requires [4Fe-4S] cluster as cofactor.

It is found in the cell inner membrane. It carries out the reaction a menaquinone + succinate = a menaquinol + fumarate. Its function is as follows. The fumarate reductase enzyme complex is required for fumarate respiration using formate or sulfide as electron donor. This chain is Fumarate reductase iron-sulfur subunit (frdB), found in Wolinella succinogenes (strain ATCC 29543 / DSM 1740 / CCUG 13145 / JCM 31913 / LMG 7466 / NCTC 11488 / FDC 602W) (Vibrio succinogenes).